The chain runs to 277 residues: Alpha-ketoglutarate-dependent dioxygenase tstK (277 aa).

It belongs to the asaB hydroxylase/desaturase family.

The catalysed reaction is 2-[(1R,8S,14R,15R)-11-hydroxy-14,15-bis[(6E)-oct-6-en-1-yl]-3,5,9-trioxo-4,10-dioxatetracyclo[9.4.0.0(2,6).0(8,12)]pentadeca-2(6),12-dien-8-yl]acetate + 3 2-oxoglutarate + 3 O2 = phomoidride A + 3 succinate + 3 CO2 + H2O. Functionally, alpha-ketoglutarate-dependent dioxygenase; part of the gene cluster that mediates the biosynthesis of the antihypercholesterolemic agents phomoidrides which are dimeric anhydrides. Within the pathway, tstK is responsible for the iterative oxidation necessary to convert prephomoidride to phomoidride A. The pathway begins with the highly reducing polyketide synthase tstiA that catalyzes the formation of a C12-fatty acyl-ACP, starting from one acetate and 5 malonate units. The hydrolase tstM is involved in the release of the C12-fatty acyl chain from phiA. The alkylcitrate synthase (ACS) tstJ and the alkylcitrate dehydratase (ACDH) tstI then give rise to decarboxylated monomeric anhydrides by coupling the C12-fatty acyl chain with oxalacetic acid. The cyclase tstC is responsible for the dimerization of the monomeric anhydrides which leads to the production of prephomoidride that contains the characteristic bicyclo[4.3.1]deca-1,6-diene system of phomoidrides. Iterative oxidation catalyzed by the alpha-ketoglutarate-dependent dioxygenase tstK produced then phomoidride A. Finally, the methyltransferase tstE converts phomoidride A to phomoidride B via an acetalization reaction. The phosphatidylethanolamine-binding protein tstB and tstN are not essential for dimerization and their functions have still to be determined. The sequence is that of Alpha-ketoglutarate-dependent dioxygenase tstK from Talaromyces stipitatus (strain ATCC 10500 / CBS 375.48 / QM 6759 / NRRL 1006) (Penicillium stipitatum).